The following is a 587-amino-acid chain: Branchpoint-bridging protein (587 aa).

Over residues 1-16 (MLNSRSVGSTGSNNTP) the composition is skewed to polar residues. 2 disordered regions span residues 1-64 (MLNS…DGRG) and 121-142 (GDVV…DNHG). Residues 44–64 (DSYKSNSRMDHRPDGYHDGRG) show a composition bias toward basic and acidic residues. A phosphoserine mark is found at serine 131 and serine 133. Residues 191–271 (YVPVKDYPEI…DKINHAIKLI (81 aa)) enclose the KH domain. CCHC-type zinc fingers lie at residues 309–326 (QVCQ…DCPE) and 334–351 (IVCR…DCPV). Disordered stretches follow at residues 375-490 (GGGS…PGTS) and 551-587 (IPGA…YSNR). The segment covering 379–399 (AISNGNGEPQKSIEFSESGAA) has biased composition (polar residues). A compositionally biased stretch (low complexity) spans 410–454 (AAASTSVSSSTSSPAPWAKPASSAAPSNPAPWQQPAAPQSAPALS). Composition is skewed to polar residues over residues 465-483 (QPTQ…SQNA) and 563-573 (SYNTSESSNLN).

This sequence belongs to the BBP/SF1 family. In terms of assembly, U2AF large subunit (u2af59), U2AF small subunit (u2af23) and bpb1 interact to form a complex required for complex A formation.

The protein resides in the cytoplasm. The protein localises to the nucleus. Its function is as follows. Necessary for the splicing of pre-mRNA. The BPB1(SF1)-u2af59-u2af23 complex has a role in the recognition of the branch site (5'-UACUAAC-3'), the pyrimidine tract and the 3'-splice site at the 3'-end of introns. In Schizosaccharomyces pombe (strain 972 / ATCC 24843) (Fission yeast), this protein is Branchpoint-bridging protein (bpb1).